The primary structure comprises 432 residues: Serine--tRNA ligase (432 aa).

L-serine is bound at residue 239–241 (TSE). An ATP-binding site is contributed by 270 to 272 (RSE). Glutamate 293 is a binding site for L-serine. 357–360 (EISS) contacts ATP. Serine 392 provides a ligand contact to L-serine.

The protein belongs to the class-II aminoacyl-tRNA synthetase family. Type-1 seryl-tRNA synthetase subfamily. Homodimer. The tRNA molecule binds across the dimer.

Its subcellular location is the cytoplasm. The catalysed reaction is tRNA(Ser) + L-serine + ATP = L-seryl-tRNA(Ser) + AMP + diphosphate + H(+). It catalyses the reaction tRNA(Sec) + L-serine + ATP = L-seryl-tRNA(Sec) + AMP + diphosphate + H(+). It functions in the pathway aminoacyl-tRNA biosynthesis; selenocysteinyl-tRNA(Sec) biosynthesis; L-seryl-tRNA(Sec) from L-serine and tRNA(Sec): step 1/1. In terms of biological role, catalyzes the attachment of serine to tRNA(Ser). Is also able to aminoacylate tRNA(Sec) with serine, to form the misacylated tRNA L-seryl-tRNA(Sec), which will be further converted into selenocysteinyl-tRNA(Sec). The chain is Serine--tRNA ligase from Methylibium petroleiphilum (strain ATCC BAA-1232 / LMG 22953 / PM1).